Reading from the N-terminus, the 996-residue chain is Disease resistance protein RGA4 (996 aa).

The segment at 1-176 (MEAALLSGFI…PRIHEADLVG (176 aa)) is structured coiled coil (CC) domain. Residues 111–138 (NLQLAQQLQRLKRMAAEANQRKQRYTAA) are a coiled coil. In terms of domain architecture, NB-ARC spans 180–462 (DREELLEQLA…RWLAEGFVEP (283 aa)). LRR repeat units lie at residues 481 to 503 (RNIIEPINVSNNDKVKTCQTYGM), 504 to 528 (MREFISHMSISQNFVTFFCDDKFVP), 529 to 549 (KYVRRLSLHGDTVVNGDNFNG), 577 to 599 (LRVLDLEKCDDLKDDHLKEICNL), 600 to 621 (VLLKYLSLGGNISKLPKDIAKL), 622 to 644 (KDLEALDVRRSKVKIMPVEVFGL), 698 to 722 (MNKLRKLKIWCTSSAGSTDWTDLRE), 759 to 781 (PCYLSSLKLHGNFPQLPQFVTSL), 782 to 804 (RGLKELCLSSTKFTTGLLEALSN), 805 to 830 (LSYLQYLKLVADELEKFIIKVQGFPR), and 851 to 874 (LPFLVTLQLLCKDLHGLSDIQIEC).

It belongs to the disease resistance NB-LRR family. In terms of assembly, forms homodimer or heterodimer with RGA5 through its coiled coil (CC) domain. In terms of tissue distribution, expressed in leaves.

Its subcellular location is the cytoplasm. In terms of biological role, disease resistance (R) protein. Resistance proteins guard the plant against pathogens that contain an appropriate avirulence protein via an indirect interaction with this avirulence protein. That triggers a defense system including the hypersensitive response, which restricts the pathogen growth. Contribution of RGA5 is required to recognize the effector avirulence proteins AVR-Pia and AVR1-CO39 from M.oryzae. Acts as a constitutively active cell death inducer that is repressed by RGA5. Immune response triggered by the RGA4-RGA5 -mediated recognition of AVR1-CO39 confers resistance to X.oryzae pathovars. This chain is Disease resistance protein RGA4, found in Oryza sativa subsp. japonica (Rice).